We begin with the raw amino-acid sequence, 386 residues long: Threonine--tRNA ligase editing subunit (386 aa).

Belongs to the class-II aminoacyl-tRNA synthetase family. Archaea-specific ThrRS editing domain subfamily. Probably interacts with its catalytic subunit (AC Q97VW8); a subunit fusion (in the order edit-catalytic) is fully functional.

It localises to the cytoplasm. Freestanding tRNA editing subunit of threonine--tRNA ligase, the catalytic subunit is AC Q97VW8. Deacylates (edits) mischarged L-seryl-tRNA(Thr) in trans, removing L-serine, has no aminoacylation activity. In vitro when both subunits are present, or if the 2 subunits are fused, L-seryl-tRNA(Thr) is no longer produced. Has no activity on correctly acylated L-seryl-tRNA(Ser) or L-threonyl-tRNA(Thr). Editing is probably catalyzed by the 2'-OH of A76 of tRNA(Thr). The protein is Threonine--tRNA ligase editing subunit of Saccharolobus solfataricus (strain ATCC 35092 / DSM 1617 / JCM 11322 / P2) (Sulfolobus solfataricus).